We begin with the raw amino-acid sequence, 364 residues long: tRNA 2-selenouridine synthase (364 aa).

A Rhodanese domain is found at 15–138 (FVNDTPLMDM…LRRFLIETID (124 aa)). Cys98 (S-selanylcysteine intermediate) is an active-site residue.

It belongs to the SelU family. In terms of assembly, monomer.

It catalyses the reaction 5-methylaminomethyl-2-thiouridine(34) in tRNA + selenophosphate + (2E)-geranyl diphosphate + H2O + H(+) = 5-methylaminomethyl-2-selenouridine(34) in tRNA + (2E)-thiogeraniol + phosphate + diphosphate. The catalysed reaction is 5-methylaminomethyl-2-thiouridine(34) in tRNA + (2E)-geranyl diphosphate = 5-methylaminomethyl-S-(2E)-geranyl-thiouridine(34) in tRNA + diphosphate. The enzyme catalyses 5-methylaminomethyl-S-(2E)-geranyl-thiouridine(34) in tRNA + selenophosphate + H(+) = 5-methylaminomethyl-2-(Se-phospho)selenouridine(34) in tRNA + (2E)-thiogeraniol. It carries out the reaction 5-methylaminomethyl-2-(Se-phospho)selenouridine(34) in tRNA + H2O = 5-methylaminomethyl-2-selenouridine(34) in tRNA + phosphate. Its function is as follows. Involved in the post-transcriptional modification of the uridine at the wobble position (U34) of tRNA(Lys), tRNA(Glu) and tRNA(Gln). Catalyzes the conversion of 2-thiouridine (S2U-RNA) to 2-selenouridine (Se2U-RNA). Acts in a two-step process involving geranylation of 2-thiouridine (S2U) to S-geranyl-2-thiouridine (geS2U) and subsequent selenation of the latter derivative to 2-selenouridine (Se2U) in the tRNA chain. This Photobacterium profundum (strain SS9) protein is tRNA 2-selenouridine synthase.